Consider the following 207-residue polypeptide: dTTP/UTP pyrophosphatase (207 aa).

Residue aspartate 79 is the Proton acceptor of the active site.

This sequence belongs to the Maf family. YhdE subfamily. A divalent metal cation serves as cofactor.

The protein resides in the cytoplasm. It catalyses the reaction dTTP + H2O = dTMP + diphosphate + H(+). The catalysed reaction is UTP + H2O = UMP + diphosphate + H(+). In terms of biological role, nucleoside triphosphate pyrophosphatase that hydrolyzes dTTP and UTP. May have a dual role in cell division arrest and in preventing the incorporation of modified nucleotides into cellular nucleic acids. The chain is dTTP/UTP pyrophosphatase from Nitrobacter hamburgensis (strain DSM 10229 / NCIMB 13809 / X14).